The following is a 153-amino-acid chain: MLTFDEAAEGLYVAAKYSELTLDAIEMLQRELKVPNPVPREKIHSTICYSRVMVPYSVASGSFEVATSGHLEVWNHGSSPLLVLVLDSDYLRCRHQYARAIGATHDFQDYTPHITLSYNVGVLKYPKEKYPIRVVLDREYKEPLKLDWADDLK.

A 3',3'-cGAMP-binding site is contributed by Tyr12. 3',3'-cUAMP is bound at residue Tyr12. Catalysis depends on residues His44, Thr46, His113, and Thr115. Residues Glu142 and Trp148 each contribute to the 3',3'-cGAMP site. Positions 142 and 148 each coordinate 3',3'-cUAMP.

It belongs to the anti-CBASS protein Acb1 family.

It carries out the reaction 3',3'-cUAMP + H2O = U[3'-5']pAp[3'] + H(+). The enzyme catalyses 3',3',3'-c-tri-AMP + H2O = A[3'-5']pA[3'-5']pAp[3'] + H(+). The catalysed reaction is 3',3',3'-cAAG + H2O = G[3'-5']pA[3'-5']pAp[3'] + H(+). It catalyses the reaction 3',3',3'-cAAG + H2O = A[3'-5']pG[3'-5']pAp[3'] + H(+). It carries out the reaction 3',3'-cGAMP + H2O = G[3'-5']pAp[3'] + H(+). Its function is as follows. Counteracts the host CBASS antiviral defense system. Phosphodiesterase that enables metal-independent hydrolysis of the host cyclic di- and trinucleotide CBASS signals such as 3'3'-cGAMP, 3'3'cUA, and 3'3'3'-cAAA. Does not cleave cGG or cA4. Besides evasion of the CBASS system, might also enable evasion of the type III CRISPR systems that use cA3 signals. The polypeptide is Anti-CBASS protein Acb1 (Yersinia enterocolitica).